A 408-amino-acid chain; its full sequence is MKNQLIDRLTRYTTIDTQSDPKSTTTPSTEKQWDLLHLLEKELQQLGLPTDLDENGYLFATLESNIDADVPTVGFLAHVDTSPDFNASNVKPQIIENYDGKPYKLGNTKRVLDPKVFPELNSLVGHTLMVTDGTSLLGADDKAGIVEIMEAICYLQEHPEIKHGTIRIGFTPDEEIGRGPHKFDVDRFNADFAYTMDGSQYGELQYESFNAAEAVITCHGVNVHPGSAKNAMVNAIRLGEQFDSLLPDSEVPERTEGYEGFYHLMNFEGTVEKATLQYIIRDHDKKQFELRKKRILEIRDDINAHFENYPVKVDISDQYFNMAEKILPLPHIIDIPKRVFAKLDIPANTEPIRGGTDGSQLSFMGLPTPNIFTGCGNFHGPYEYASIDVMEKAVQVIIGIVEDIAENH.

His-78 contributes to the Zn(2+) binding site. Asp-80 is a catalytic residue. Residue Asp-140 participates in Zn(2+) binding. The active-site Proton acceptor is the Glu-174. 3 residues coordinate Zn(2+): Glu-175, Asp-197, and His-379.

Belongs to the peptidase M20B family. Requires Zn(2+) as cofactor.

The protein localises to the cytoplasm. It carries out the reaction Release of the N-terminal residue from a tripeptide.. Functionally, cleaves the N-terminal amino acid of tripeptides. The sequence is that of Peptidase T from Staphylococcus aureus (strain Mu3 / ATCC 700698).